Reading from the N-terminus, the 337-residue chain is ATP-dependent 6-phosphofructokinase (337 aa).

Residue glycine 11 participates in ATP binding. Residue 21-25 (RAVVR) participates in ADP binding. ATP is bound by residues 72–73 (RY) and 102–105 (GDGS). A Mg(2+)-binding site is contributed by aspartate 103. 125 to 127 (TID) contacts substrate. Aspartate 127 functions as the Proton acceptor in the catalytic mechanism. Residue arginine 154 participates in ADP binding. Substrate is bound by residues arginine 162 and 169–171 (MGR). ADP is bound by residues 185-187 (GAD), lysine 212, and 214-216 (KNH). Residues glutamate 223, arginine 245, and 251–254 (HILR) each bind substrate.

Belongs to the phosphofructokinase type A (PFKA) family. ATP-dependent PFK group I subfamily. Prokaryotic clade 'B1' sub-subfamily. As to quaternary structure, homotetramer. Mg(2+) serves as cofactor.

It localises to the cytoplasm. The enzyme catalyses beta-D-fructose 6-phosphate + ATP = beta-D-fructose 1,6-bisphosphate + ADP + H(+). Its pathway is carbohydrate degradation; glycolysis; D-glyceraldehyde 3-phosphate and glycerone phosphate from D-glucose: step 3/4. With respect to regulation, allosterically activated by ADP and other diphosphonucleosides, and allosterically inhibited by phosphoenolpyruvate. Functionally, catalyzes the phosphorylation of D-fructose 6-phosphate to fructose 1,6-bisphosphate by ATP, the first committing step of glycolysis. The polypeptide is ATP-dependent 6-phosphofructokinase (Streptococcus pyogenes serotype M3 (strain SSI-1)).